The primary structure comprises 368 residues: Histidinol-phosphate aminotransferase 1 (368 aa).

Position 224 is an N6-(pyridoxal phosphate)lysine (K224).

Belongs to the class-II pyridoxal-phosphate-dependent aminotransferase family. Histidinol-phosphate aminotransferase subfamily. Homodimer. Pyridoxal 5'-phosphate is required as a cofactor.

It catalyses the reaction L-histidinol phosphate + 2-oxoglutarate = 3-(imidazol-4-yl)-2-oxopropyl phosphate + L-glutamate. It functions in the pathway amino-acid biosynthesis; L-histidine biosynthesis; L-histidine from 5-phospho-alpha-D-ribose 1-diphosphate: step 7/9. The protein is Histidinol-phosphate aminotransferase 1 (hisC1) of Rhizobium meliloti (strain 1021) (Ensifer meliloti).